Reading from the N-terminus, the 336-residue chain is Ketoreductase adrE (336 aa).

Residue tyrosine 171 participates in NADP(+) binding.

The protein belongs to the NAD(P)-dependent epimerase/dehydratase family. Dihydroflavonol-4-reductase subfamily.

Its pathway is secondary metabolite biosynthesis; terpenoid biosynthesis. Ketoreductase; part of the gene cluster that mediates the biosynthesis of andrastins, meroterpenoid compounds that exhibit inhibitory activity against ras farnesyltransferase, suggesting that they could be promising leads for antitumor agents. The first step of the pathway is the synthesis of 3,5-dimethylorsellinic acid (DMOA) by the polyketide synthase adrD via condensation of one acetyl-CoA starter unit with 3 malonyl-CoA units and 2 methylations. DMAO is then converted to farnesyl-DMAO by the prenyltransferase adrG. The methyltransferase adrK catalyzes the methylation of the carboxyl group of farnesyl-DMAO to farnesyl-DMAO methyl ester which is further converted to epoxyfarnesyl-DMAO methyl ester by the FAD-dependent monooxygenase adrH. The terpene cyclase adrI then catalyzes the carbon skeletal rearrangement to generate the andrastin E, the first compound in the pathway having the andrastin scaffold, with the tetracyclic ring system. The post-cyclization tailoring enzymes adrF, adrE, adrJ, and adrA, are involved in the conversion of andrastin E into andrastin A. The short chain dehydrogenase adrF is responsible for the oxidation of the C-3 a hydroxyl group of andrastin E to yield the corresponding ketone, andrastin D. The ketoreductase adrE stereoselectively reduces the carbonyl moiety to reverse the stereochemistry of the C-3 position to yield andrastin F. The acetyltransferase adrJ is the acetyltransferase that attaches the acetyl group to the C-3 hydroxyl group of andrastin F to yield andrastin C. Finally, the cytochrome P450 monooxygenase adrA catalyzes two sequential oxidation reactions of the C-23 methyl group, to generate the corresponding alcohol andrastin B, and aldehyde andrastin A. The sequence is that of Ketoreductase adrE from Penicillium rubens (strain ATCC 28089 / DSM 1075 / NRRL 1951 / Wisconsin 54-1255) (Penicillium chrysogenum).